Reading from the N-terminus, the 183-residue chain is Endoribonuclease YbeY (183 aa).

Zn(2+) contacts are provided by His143, His147, and His153.

The protein belongs to the endoribonuclease YbeY family. Requires Zn(2+) as cofactor.

It is found in the cytoplasm. In terms of biological role, single strand-specific metallo-endoribonuclease involved in late-stage 70S ribosome quality control and in maturation of the 3' terminus of the 16S rRNA. This is Endoribonuclease YbeY from Rickettsia bellii (strain OSU 85-389).